The primary structure comprises 433 residues: Chaperone SurA (433 aa).

A signal peptide spans 1 to 20; sequence MKNWRTLIFGLMFSVSTAFA. PpiC domains are found at residues 171–272 and 282–382; these read DTEL…KVND and VTEV…QLLD.

It is found in the periplasm. It catalyses the reaction [protein]-peptidylproline (omega=180) = [protein]-peptidylproline (omega=0). In terms of biological role, chaperone involved in the correct folding and assembly of outer membrane proteins. Recognizes specific patterns of aromatic residues and the orientation of their side chains, which are found more frequently in integral outer membrane proteins. May act in both early periplasmic and late outer membrane-associated steps of protein maturation. This is Chaperone SurA from Photorhabdus laumondii subsp. laumondii (strain DSM 15139 / CIP 105565 / TT01) (Photorhabdus luminescens subsp. laumondii).